The primary structure comprises 136 residues: NADH-ubiquinone oxidoreductase chain 2 (136 aa).

Transmembrane regions (helical) follow at residues 12–32 (YFLI…NQSF), 34–54 (FLIP…MWLV), 74–94 (IGPL…WLMV), and 99–119 (FLLM…AVIL).

The protein belongs to the complex I subunit 2 family.

The protein localises to the mitochondrion inner membrane. The catalysed reaction is a ubiquinone + NADH + 5 H(+)(in) = a ubiquinol + NAD(+) + 4 H(+)(out). In terms of biological role, core subunit of the mitochondrial membrane respiratory chain NADH dehydrogenase (Complex I) that is believed to belong to the minimal assembly required for catalysis. Complex I functions in the transfer of electrons from NADH to the respiratory chain. The immediate electron acceptor for the enzyme is believed to be ubiquinone. The polypeptide is NADH-ubiquinone oxidoreductase chain 2 (ND2) (Artemia salina (Brine shrimp)).